The primary structure comprises 160 residues: Cytochrome b6-f complex subunit 4 (160 aa).

A run of 3 helical transmembrane segments spans residues 36-56 (LLYIFPVVILGTIACTVGLAV), 95-115 (LLGVLLMAAVPAGLLTVPFLE), and 131-151 (TVFLIGTVVALWLGIGAALPI).

It belongs to the cytochrome b family. PetD subfamily. The 4 large subunits of the cytochrome b6-f complex are cytochrome b6, subunit IV (17 kDa polypeptide, petD), cytochrome f and the Rieske protein, while the 4 small subunits are petG, petL, petM and petN. The complex functions as a dimer.

Its subcellular location is the plastid. It localises to the chloroplast thylakoid membrane. Its function is as follows. Component of the cytochrome b6-f complex, which mediates electron transfer between photosystem II (PSII) and photosystem I (PSI), cyclic electron flow around PSI, and state transitions. The sequence is that of Cytochrome b6-f complex subunit 4 from Marchantia polymorpha (Common liverwort).